The primary structure comprises 329 residues: DNA-directed RNA polymerase subunit alpha (329 aa).

An alpha N-terminal domain (alpha-NTD) region spans residues 1-234 (MQGSVTEFLR…EQLDAFVELR (234 aa)). The alpha C-terminal domain (alpha-CTD) stretch occupies residues 248 to 329 (FDPILLRPVD…WPPASLVDDL (82 aa)).

It belongs to the RNA polymerase alpha chain family. As to quaternary structure, homodimer. The RNAP catalytic core consists of 2 alpha, 1 beta, 1 beta' and 1 omega subunit. When a sigma factor is associated with the core the holoenzyme is formed, which can initiate transcription.

It carries out the reaction RNA(n) + a ribonucleoside 5'-triphosphate = RNA(n+1) + diphosphate. Its function is as follows. DNA-dependent RNA polymerase catalyzes the transcription of DNA into RNA using the four ribonucleoside triphosphates as substrates. This chain is DNA-directed RNA polymerase subunit alpha, found in Shewanella violacea (strain JCM 10179 / CIP 106290 / LMG 19151 / DSS12).